The following is a 168-amino-acid chain: uncharacterized protein (168 aa).

An N-acetyltransferase domain is found at Glu-7–Met-168.

This is an uncharacterized protein from Azospirillum brasilense.